The chain runs to 553 residues: tRNA pseudouridine synthase 1 (553 aa).

The tract at residues 1–78 is disordered; that stretch reads MSEEQNLRPV…ETRSKDKDES (78 aa). Composition is skewed to basic and acidic residues over residues 33-51 and 64-78; these read RKAD…KPND and SNEK…KDES. D158 functions as the Nucleophile in the catalytic mechanism. The interval 517-539 is disordered; it reads DLEQKAPSDPTPSDEKGKKPQRP.

This sequence belongs to the tRNA pseudouridine synthase TruA family. Zn(2+) serves as cofactor.

The protein resides in the nucleus. It carries out the reaction a uridine in tRNA = a pseudouridine in tRNA. The enzyme catalyses uridine in snRNA = pseudouridine in snRNA. The catalysed reaction is a uridine in mRNA = a pseudouridine in mRNA. Its function is as follows. Formation of pseudouridine at positions 27 and 28 in the anticodon stem and loop of transfer RNAs; at positions 34 and 36 of intron-containing precursor tRNA(Ile) and at position 35 in the intron-containing tRNA(Tyr). Catalyzes pseudouridylation at position 44 in U2 snRNA. Also catalyzes pseudouridylation of mRNAs. This is tRNA pseudouridine synthase 1 (PUS1) from Kluyveromyces lactis (strain ATCC 8585 / CBS 2359 / DSM 70799 / NBRC 1267 / NRRL Y-1140 / WM37) (Yeast).